A 141-amino-acid chain; its full sequence is Hemoglobin subunit alpha-A (141 aa).

Residues 1–141 (VLSAADKNNV…VGNVLTAKYR (141 aa)) form the Globin domain. His58 is an O2 binding site. His87 contributes to the heme b binding site.

Belongs to the globin family. In terms of assembly, heterotetramer of two alpha chains and two beta chains. Red blood cells.

Involved in oxygen transport from the lung to the various peripheral tissues. This is Hemoglobin subunit alpha-A (HBAA) from Francolinus pondicerianus (Grey francolin).